A 228-amino-acid chain; its full sequence is Protein-L-isoaspartate O-methyltransferase (228 aa).

Positions 1–20 are disordered; it reads MVAVSLKMSQPAAPPPPMGE. Ser-76 is an active-site residue.

The protein belongs to the methyltransferase superfamily. L-isoaspartyl/D-aspartyl protein methyltransferase family.

The protein resides in the cytoplasm. It carries out the reaction [protein]-L-isoaspartate + S-adenosyl-L-methionine = [protein]-L-isoaspartate alpha-methyl ester + S-adenosyl-L-homocysteine. Functionally, catalyzes the methyl esterification of L-isoaspartyl residues in peptides and proteins that result from spontaneous decomposition of normal L-aspartyl and L-asparaginyl residues. It plays a role in the repair and/or degradation of damaged proteins. This chain is Protein-L-isoaspartate O-methyltransferase, found in Magnetococcus marinus (strain ATCC BAA-1437 / JCM 17883 / MC-1).